A 326-amino-acid chain; its full sequence is Peroxidase 3 (326 aa).

The first 24 residues, 1–24 (MNCLIAIALSVSFFLVGIVGPIQA), serve as a signal peptide directing secretion. Cystine bridges form between Cys-35–Cys-113, Cys-68–Cys-73, Cys-119–Cys-321, and Cys-198–Cys-231. His-66 functions as the Proton acceptor in the catalytic mechanism. Asp-67, Val-70, Gly-72, Asp-74, and Ser-76 together coordinate Ca(2+). 2 N-linked (GlcNAc...) asparagine glycosylation sites follow: Asn-80 and Asn-138. Pro-161 contributes to the substrate binding site. A glycan (N-linked (GlcNAc...) asparagine) is linked at Asn-166. His-191 serves as a coordination point for heme b. Position 192 (Thr-192) interacts with Ca(2+). N-linked (GlcNAc...) asparagine glycosylation is found at Asn-207 and Asn-237. Residues Asp-244, Ser-247, and Asp-252 each contribute to the Ca(2+) site.

This sequence belongs to the peroxidase family. Classical plant (class III) peroxidase subfamily. The cofactor is heme b. Ca(2+) is required as a cofactor. Expressed in root cells.

The protein localises to the secreted. The catalysed reaction is 2 a phenolic donor + H2O2 = 2 a phenolic radical donor + 2 H2O. In terms of biological role, removal of H(2)O(2), oxidation of toxic reductants, biosynthesis and degradation of lignin, suberization, auxin catabolism, response to environmental stresses such as wounding, pathogen attack and oxidative stress. These functions might be dependent on each isozyme/isoform in each plant tissue. The polypeptide is Peroxidase 3 (PER3) (Arabidopsis thaliana (Mouse-ear cress)).